We begin with the raw amino-acid sequence, 652 residues long: Sodium-dependent phosphate transporter 1-A (652 aa).

At 1–25 the chain is on the cytoplasmic side; the sequence is MESTTLASLAAVSVLAAGAQTDMSD. Residues 26-46 form a helical membrane-spanning segment; it reads VLWLLILGFVIAFILAFSVGA. Over 47-66 the chain is Extracellular; that stretch reads NDVANSFGTAVGSGVVTLRQ. A helical transmembrane segment spans residues 67–87; that stretch reads ACILATIFETVGAMLLGAKVS. At 88–104 the chain is on the cytoplasmic side; that stretch reads ETIRSGIIDVHMYNGSE. The helical transmembrane segment at 105–125 threads the bilayer; the sequence is AVLMAGSISAMFGSAVWQLAA. The Extracellular portion of the chain corresponds to 126 to 162; that stretch reads SFLKLPISGTHCIVGATIGFSMVARGHQGVKWLELLR. The chain crosses the membrane as a helical span at residues 163 to 183; the sequence is IVASWFLSPLLSGIMSAVLFY. The Cytoplasmic segment spans residues 184 to 201; the sequence is FVRKFILNKDDPVPNGLR. A helical membrane pass occupies residues 202-222; it reads ALPVFYAVTMGINLFSIMFTG. Topologically, residues 223–234 are extracellular; that stretch reads APMLGFDRIPWW. The chain crosses the membrane as a helical span at residues 235–255; the sequence is GTLLISLGCAILTALVVWFIV. The Cytoplasmic portion of the chain corresponds to 256–482; the sequence is CPRLKKKMQS…IDELEIDKPE (227 aa). The interval 278–308 is disordered; the sequence is TQLVEKKPSSNGLMDHHPGPPRNYSPVPQTP. A compositionally biased stretch (basic and acidic residues) spans 281-295; the sequence is VEKKPSSNGLMDHHP. Positions 297–308 are enriched in pro residues; it reads PPRNYSPVPQTP. A helical membrane pass occupies residues 483 to 503; sequence VSTLFQFLQILTACFGSFAHG. Over 504-531 the chain is Extracellular; the sequence is GNDVSNAIGPLVALWLIYDSASVAPSAP. Residues 532 to 552 form a helical membrane-spanning segment; that stretch reads TPIWLLLYGGVGICTGLWIWG. Residues 553–571 are Cytoplasmic-facing; sequence RRVIQTMGKDLTPITPSSG. Residues 572-592 traverse the membrane as a helical segment; that stretch reads FSIELASAITVVVASNIGLPV. Topologically, residues 593 to 621 are extracellular; that stretch reads STTHCKVGSVVSVGWLRSRKAVDWHLFRN. The helical transmembrane segment at 622-642 threads the bilayer; that stretch reads IFIAWFVTVPISGLISAAIMA. Over 643 to 652 the chain is Cytoplasmic; it reads LFYYVILPLT.

The protein belongs to the inorganic phosphate transporter (PiT) (TC 2.A.20) family.

The protein localises to the membrane. Its function is as follows. Sodium-phosphate symporter which plays a fundamental housekeeping role in phosphate transport. The protein is Sodium-dependent phosphate transporter 1-A (slc20a1a) of Danio rerio (Zebrafish).